Consider the following 217-residue polypeptide: Putative oxidative stress regulator AosR (217 aa).

Residues C5–C9 carry the CXXXC motif. A disulfide bond links C5 and C9.

This sequence belongs to the AosR family.

The protein is Putative oxidative stress regulator AosR of Mycobacterium leprae (strain TN).